Reading from the N-terminus, the 494-residue chain is Probable serine/threonine-protein kinase BSK3 (494 aa).

Glycine 2 is lipidated: N-myristoyl glycine. Residues 61–316 form the Protein kinase domain; sequence ENIVSEHGEK…SLVQALAPLQ (256 aa). ATP contacts are provided by residues 67–75 and lysine 89; that span reads HGEKAPNVV. Aspartate 183 serves as the catalytic Proton acceptor. Phosphoserine is present on residues serine 213 and serine 215. A TPR repeat occupies 423–456; it reads PTIYARRCLSYLMNDKAEQALSDAMQALVISPTW.

As to quaternary structure, interacts with BRI1 and BSL1. In terms of processing, phosphorylated at Ser-213 and Ser-215 by BRI1. Phosphorylation at Ser-215 is required for its function in the regulation of brassinosteroid signaling. Phosphorylation by BRI1 disrupts the interaction between its TPR and kinase domains, thereby increasing the binding between its kinase domain and BSL1.

The protein localises to the cell membrane. The catalysed reaction is L-seryl-[protein] + ATP = O-phospho-L-seryl-[protein] + ADP + H(+). It catalyses the reaction L-threonyl-[protein] + ATP = O-phospho-L-threonyl-[protein] + ADP + H(+). Functionally, probable serine/threonine kinase that acts as a positive regulator of brassinosteroid (BR) signaling downstream of BRI1. This is Probable serine/threonine-protein kinase BSK3 from Oryza sativa subsp. japonica (Rice).